Reading from the N-terminus, the 120-residue chain is NAD(P)H-quinone oxidoreductase subunit 3, chloroplastic (120 aa).

3 consecutive transmembrane segments (helical) span residues Ile9–Gly29, Met64–Met84, and Val88–Ser108.

Belongs to the complex I subunit 3 family. In terms of assembly, NDH is composed of at least 16 different subunits, 5 of which are encoded in the nucleus.

It is found in the plastid. The protein resides in the chloroplast thylakoid membrane. The enzyme catalyses a plastoquinone + NADH + (n+1) H(+)(in) = a plastoquinol + NAD(+) + n H(+)(out). The catalysed reaction is a plastoquinone + NADPH + (n+1) H(+)(in) = a plastoquinol + NADP(+) + n H(+)(out). NDH shuttles electrons from NAD(P)H:plastoquinone, via FMN and iron-sulfur (Fe-S) centers, to quinones in the photosynthetic chain and possibly in a chloroplast respiratory chain. The immediate electron acceptor for the enzyme in this species is believed to be plastoquinone. Couples the redox reaction to proton translocation, and thus conserves the redox energy in a proton gradient. The protein is NAD(P)H-quinone oxidoreductase subunit 3, chloroplastic of Phaseolus vulgaris (Kidney bean).